A 308-amino-acid chain; its full sequence is Isoaspartyl peptidase/L-asparaginase (308 aa).

Met1 bears the N-acetylmethionine mark. Catalysis depends on Thr168, which acts as the Nucleophile. Residues 196–199 and 219–222 contribute to the substrate site; these read RVGD and TGHG.

This sequence belongs to the Ntn-hydrolase family. Heterodimer of an alpha and beta chain produced by autocleavage. This heterodimer may then dimerize in turn, giving rise to a heterotetramer. Cleaved into an alpha and beta chain by autocatalysis; this activates the enzyme. The N-terminal residue of the beta subunit is responsible for the nucleophile hydrolase activity.

It is found in the cytoplasm. It carries out the reaction L-asparagine + H2O = L-aspartate + NH4(+). It catalyses the reaction Cleavage of a beta-linked Asp residue from the N-terminus of a polypeptide.. In terms of biological role, has both L-asparaginase and beta-aspartyl peptidase activity. May be involved in the production of L-aspartate, which can act as an excitatory neurotransmitter in some brain regions. Is highly active with L-Asp beta-methyl ester. Besides, has catalytic activity toward beta-aspartyl dipeptides and their methyl esters, including beta-L-Asp-L-Phe, beta-L-Asp-L-Phe methyl ester (aspartame), beta-L-Asp-L-Ala, beta-L-Asp-L-Leu and beta-L-Asp-L-Lys. Does not have aspartylglucosaminidase activity and is inactive toward GlcNAc-L-Asn. Likewise, has no activity toward glutamine. This is Isoaspartyl peptidase/L-asparaginase (ASRGL1) from Macaca fascicularis (Crab-eating macaque).